A 249-amino-acid chain; its full sequence is Pyridoxine 5'-phosphate synthase (249 aa).

3-amino-2-oxopropyl phosphate is bound at residue Asn-12. 14 to 15 (DH) is a binding site for 1-deoxy-D-xylulose 5-phosphate. Arg-23 contacts 3-amino-2-oxopropyl phosphate. His-48 serves as the catalytic Proton acceptor. Residues Arg-50 and His-55 each coordinate 1-deoxy-D-xylulose 5-phosphate. The Proton acceptor role is filled by Glu-75. Thr-105 serves as a coordination point for 1-deoxy-D-xylulose 5-phosphate. Residue His-199 is the Proton donor of the active site. 3-amino-2-oxopropyl phosphate-binding positions include Gly-200 and 221–222 (GH).

It belongs to the PNP synthase family. In terms of assembly, homooctamer; tetramer of dimers.

The protein resides in the cytoplasm. The catalysed reaction is 3-amino-2-oxopropyl phosphate + 1-deoxy-D-xylulose 5-phosphate = pyridoxine 5'-phosphate + phosphate + 2 H2O + H(+). Its pathway is cofactor biosynthesis; pyridoxine 5'-phosphate biosynthesis; pyridoxine 5'-phosphate from D-erythrose 4-phosphate: step 5/5. Functionally, catalyzes the complicated ring closure reaction between the two acyclic compounds 1-deoxy-D-xylulose-5-phosphate (DXP) and 3-amino-2-oxopropyl phosphate (1-amino-acetone-3-phosphate or AAP) to form pyridoxine 5'-phosphate (PNP) and inorganic phosphate. In Roseobacter denitrificans (strain ATCC 33942 / OCh 114) (Erythrobacter sp. (strain OCh 114)), this protein is Pyridoxine 5'-phosphate synthase.